A 582-amino-acid polypeptide reads, in one-letter code: Vesicular glutamate transporter 2 (582 aa).

Over 1–71 (MESVKQRILT…CTCFGLPRRY (71 aa)) the chain is Cytoplasmic. A helical transmembrane segment spans residues 72 to 92 (IIAIMSGLGFCISFGIRCNLG). Residues 93-125 (VAIVDMVNNSTIHRGGKVIKEKAKFNWDPETVG) are Vesicular-facing. Residues N100 and N101 are each glycosylated (N-linked (GlcNAc...) asparagine). Residues 126–146 (MIHGSFFWGYIITQIPGGYIA) traverse the membrane as a helical segment. Over 147-148 (SR) the chain is Cytoplasmic. A helical transmembrane segment spans residues 149-169 (LAANRVFGAAILLTSTLNMLI). The Vesicular portion of the chain corresponds to 170 to 177 (PSAARVHY). The chain crosses the membrane as a helical span at residues 178–198 (GCVIFVRILQGLVEGVTYPAC). The Cytoplasmic segment spans residues 199 to 216 (HGIWSKWAPPLERSRLAT). The helical transmembrane segment at 217–237 (TSFCGSYAGAVIAMPLAGILV) threads the bilayer. The Vesicular segment spans residues 238–244 (QYTGWSS). Residues 245-265 (VFYVYGSFGMIWYMFWLLVSY) form a helical membrane-spanning segment. Residues 266-310 (ESPAKHPTITDEERRYIEESIGESANLLGAMEKFKTPWRKFFTSM) are Cytoplasmic-facing. A helical transmembrane segment spans residues 311–331 (PVYAIIVANFCRSWTFYLLLI). Over 332–349 (SQPAYFEEVFGFEISKVG) the chain is Vesicular. A helical membrane pass occupies residues 350 to 370 (MLSAVPHLVMTIIVPIGGQIA). Topologically, residues 371 to 386 (DFLRSKQILSTTTVRK) are cytoplasmic. Residues 387-407 (IMNCGGFGMEATLLLVVGYSH) traverse the membrane as a helical segment. Residues 408-409 (TR) lie on the Vesicular side of the membrane. A helical transmembrane segment spans residues 410-430 (GVAISFLVLAVGFSGFAISGF). Residues 431–443 (NVNHLDIAPRYAS) lie on the Cytoplasmic side of the membrane. Residues 444-464 (ILMGISNGVGTLSGMVCPIIV) form a helical membrane-spanning segment. Over 465-477 (GAMTKNKSREEWQ) the chain is Vesicular. Residue N470 is glycosylated (N-linked (GlcNAc...) asparagine). Residues 478–498 (YVFLIAALVHYGGVIFYAIFA) traverse the membrane as a helical segment. Topologically, residues 499–582 (SGEKQPWADP…YNYKDRDDYS (84 aa)) are cytoplasmic.

This sequence belongs to the major facilitator superfamily. Sodium/anion cotransporter family. VGLUT subfamily.

Its subcellular location is the cytoplasmic vesicle. It localises to the secretory vesicle. The protein localises to the synaptic vesicle membrane. The protein resides in the synapse. It is found in the synaptosome. Its subcellular location is the cell membrane. It carries out the reaction L-glutamate(out) = L-glutamate(in). The catalysed reaction is 3 Na(+)(out) + phosphate(out) = 3 Na(+)(in) + phosphate(in). The enzyme catalyses phosphate(in) = phosphate(out). It catalyses the reaction K(+)(in) + H(+)(out) = K(+)(out) + H(+)(in). It carries out the reaction chloride(in) = chloride(out). With respect to regulation, chloride channel activity is allosterically activated by lumenal H(+) and Cl(-) leading to synaptic vesicles acidification. The L-glutamate transport activity is allosterically activated by lumenal H(+) and Cl(-). The allosteric requirement for H(+) efficiently prevents non-vesicular efflux across the plasma membrane. The L-glutamate uniporter activity exhibits a biphasic dependence on chloride concentration. In terms of biological role, multifunctional transporter that transports L-glutamate as well as multiple ions such as chloride, proton, potassium, sodium and phosphate. At the synaptic vesicle membrane, mainly functions as a uniporter which transports preferentially L-glutamate but also, phosphate from the cytoplasm into synaptic vesicles at presynaptic nerve terminals of excitatory neural cells. The L-glutamate or phosphate uniporter activity is electrogenic and is driven by the proton electrochemical gradient, mainly by the electrical gradient established by the vacuolar H(+)-ATPase across the synaptic vesicle membrane. In addition, functions as a chloride channel that allows a chloride permeation through the synaptic vesicle membrane therefore affects the proton electrochemical gradient and promotes synaptic vesicles acidification. Moreover, functions as a vesicular K(+)/H(+) antiport allowing to maintain the electrical gradient and to decrease chemical gradient and therefore sustain vesicular L-glutamate uptake. The vesicular H(+)/H(+) antiport activity is electroneutral. At the plasma membrane, following exocytosis, functions as a symporter of Na(+) and phosphate from the extracellular space to the cytoplasm allowing synaptic phosphate homeostasis regulation. The symporter activity is driven by an inside negative membrane potential and is electrogenic. Also involved in the regulation of retinal hyaloid vessel regression during postnatal development. May also play a role in the endocrine L-glutamatergic system of other tissues such as pineal gland and pancreas. In Bos taurus (Bovine), this protein is Vesicular glutamate transporter 2.